Reading from the N-terminus, the 372-residue chain is Protein phosphatase Mn(2+)-dependent 1K (372 aa).

The transit peptide at 1–29 (MLSAAFITLLRSGGNQVKKRVLLSSILLQ) directs the protein to the mitochondrion. The segment at 46-61 (RCSRFDPDGSGQPATW) is critical for association with the BCKDH complex. One can recognise a PPM-type phosphatase domain in the interval 94–346 (NVGCASLIGK…DNSTAVVVPF (253 aa)). Mn(2+)-binding residues include aspartate 127 and glycine 128. Serine 248 is subject to Phosphoserine. 2 residues coordinate Mn(2+): aspartate 298 and aspartate 337.

This sequence belongs to the PP2C family. As to quaternary structure, monomer. Interacts with E1 and E2 components of the branched-chain alpha-ketoacid dehydrogenase (BCKDH) complex; this interaction requires colocalization in mitochondria. Interacts with BCKDHA but not with BCKDHB of the E1 component. Interacts with the 24-meric E2 core composed of DBT monomers with a 24:1 stoichiometry; the N-terminal region (residues 49-61) of PPM1K and C-terminal linker of the lipoyl domain of DBT (residues 145-160) are critical for this interaction, whereas the lipoyl prosthetic group is dispensable. Competes with BCKDK for binding to the E2 core; this interaction is modulated by branched-chain alpha-keto acids. At steady state, BCKDH holoenzyme preferentially binds BCKDK and BCKDHA is phosphorylated. In response to high levels of branched-chain alpha-keto acids, the inhibitory BCKDK is replaced by activating PPM1K leading to BCKDHA dephosphorylation and BCAA degradation. Mn(2+) serves as cofactor. As to expression, highly expressed in the heart, kidney, brain and liver and to a lesser extent in testis, lung, spleen and adipose tissue. Very low amount in muscle (at protein level). Also expressed in the thymus (at protein level) and the diaphragm. Significantly reduced in hypertrophied hearts.

The protein resides in the mitochondrion matrix. The enzyme catalyses O-phospho-L-seryl-[3-methyl-2-oxobutanoate dehydrogenase] + H2O = L-seryl-[3-methyl-2-oxobutanoate dehydrogenase] + phosphate. The catalysed reaction is O-phospho-L-seryl-[protein] + H2O = L-seryl-[protein] + phosphate. It functions in the pathway protein modification. Functionally, serine/threonine-protein phosphatase component of macronutrients metabolism. Forms a functional kinase and phosphatase pair with BCKDK, serving as a metabolic regulatory node that coordinates branched-chain amino acids (BCAAs) with glucose and lipid metabolism via two distinct phosphoprotein targets: mitochondrial BCKDHA subunit of the branched-chain alpha-ketoacid dehydrogenase (BCKDH) complex and cytosolic ACLY, a lipogenic enzyme of Krebs cycle. At high levels of branched-chain ketoacids, dephosphorylates and activates mitochondrial BCKDH complex, a multisubunit complex consisting of three multimeric components each involved in different steps of BCAA catabolism: E1 composed of BCKDHA and BCKDHB, E2 core composed of DBT monomers, and E3 composed of DLD monomers. Tightly associates with the E2 component of BCKDH complex and dephosphorylates BCKDHA on Ser-334. Regulates the reversible phosphorylation of ACLY in response to changes in cellular carbohydrate abundance such as occurs during fasting to feeding metabolic transition. At fasting state, appears to dephosphorylate ACLY on Ser-455 and inactivate it. Refeeding stimulates MLXIPL/ChREBP transcription factor, leading to increased BCKDK to PPM1K expression ratio, phosphorylation and activation of ACLY that ultimately results in the generation of malonyl-CoA and oxaloacetate immediate substrates of de novo lipogenesis and gluconeogenesis, respectively. Recognizes phosphosites having SxS or RxxS motifs and strictly depends on Mn(2+) ions for the phosphatase activity. Regulates Ca(2+)-induced opening of mitochondrial transition pore and apoptotic cell death. This is Protein phosphatase Mn(2+)-dependent 1K from Mus musculus (Mouse).